The following is a 450-amino-acid chain: Tryptophan dimethylallyltransferase 2 (450 aa).

L-tryptophan-binding positions include 80 to 81 and glutamate 89; that span reads IL. Residues arginine 100, lysine 186, and tyrosine 188 each coordinate substrate. Residues tyrosine 190 and arginine 251 each coordinate L-tryptophan. Substrate-binding residues include arginine 264, lysine 266, tyrosine 268, glutamine 350, tyrosine 352, tyrosine 416, and tyrosine 420.

This sequence belongs to the tryptophan dimethylallyltransferase family. As to quaternary structure, homodimer.

The enzyme catalyses L-tryptophan + dimethylallyl diphosphate = 4-(3-methylbut-2-enyl)-L-tryptophan + diphosphate. The protein operates within alkaloid biosynthesis; ergot alkaloid biosynthesis. Functionally, catalyzes the first step of ergot alkaloid biosynthesis. Ergot alkaloids, which are produced by endophyte fungi, can enhance plant host fitness, but also cause livestock toxicosis to host plants. In Epichloe coenophiala (Tall fescue endophyte fungus), this protein is Tryptophan dimethylallyltransferase 2 (dmaW2).